The following is a 528-amino-acid chain: MSYGTINDMNESVTNYRIKKAQNNIKGWYAYSFSSEPFVVSAVSTYIPLLLQQFASINGVKVHDHSIPCLSETGSDSDKCVLGLFNNRIFVDTSSFALYVFSLSVLFQTIIVISVSGIVDLWGSVKFKGRILVWFGIVGALSTVAISKLNDTQIYSLAGLYIVANGCFGVINVVGNSLLPIFVKDSLKCQSQGAYEPDKVDSLTTVISGRGASLGYSSALIVQIVSMFLVASKKGSKQDVQVAVLFVGIWWFVWQLPMIWLIDDVTIPIRADDSTLASARSPYPGEQDALGQLNWKNYLSYGWVSLFESFKHARLLKDVMIFLIAWFIISDSITTINSTAVLFSKAELHMSTLNLIMISVLTVVNAMLGAFMIPQFLATKFRWTSSQTLMYIIIWASFIPFYGILGFFFNAFGLKHKFEMFLLAIWYGLSLGGLSAVSRSVFSLIVPPGKESTFFSMFSITDKGSSILGPFLVGLLTDKTHNIRYSFYFFFLLLMLSLPVLNCLDVKRGRREAEELSQVLPESERRLD.

Over 1 to 98 (MSYGTINDMN…IFVDTSSFAL (98 aa)) the chain is Cytoplasmic. A helical transmembrane segment spans residues 99-119 (YVFSLSVLFQTIIVISVSGIV). The Vacuolar portion of the chain corresponds to 120 to 130 (DLWGSVKFKGR). Residues 131–151 (ILVWFGIVGALSTVAISKLND) form a helical membrane-spanning segment. Over 152–153 (TQ) the chain is Cytoplasmic. A helical membrane pass occupies residues 154–174 (IYSLAGLYIVANGCFGVINVV). At 175 to 210 (GNSLLPIFVKDSLKCQSQGAYEPDKVDSLTTVISGR) the chain is on the vacuolar side. The helical transmembrane segment at 211–231 (GASLGYSSALIVQIVSMFLVA) threads the bilayer. The Cytoplasmic segment spans residues 232-241 (SKKGSKQDVQ). The helical transmembrane segment at 242 to 262 (VAVLFVGIWWFVWQLPMIWLI) threads the bilayer. At 263 to 318 (DDVTIPIRADDSTLASARSPYPGEQDALGQLNWKNYLSYGWVSLFESFKHARLLKD) the chain is on the vacuolar side. At Ser-278 the chain carries Phosphoserine. Residues 319–339 (VMIFLIAWFIISDSITTINST) traverse the membrane as a helical segment. Topologically, residues 340–352 (AVLFSKAELHMST) are cytoplasmic. Residues 353–373 (LNLIMISVLTVVNAMLGAFMI) traverse the membrane as a helical segment. The Vacuolar segment spans residues 374–388 (PQFLATKFRWTSSQT). Residues 389–409 (LMYIIIWASFIPFYGILGFFF) form a helical membrane-spanning segment. At 410-417 (NAFGLKHK) the chain is on the cytoplasmic side. Residues 418-438 (FEMFLLAIWYGLSLGGLSAVS) traverse the membrane as a helical segment. Residues 439-485 (RSVFSLIVPPGKESTFFSMFSITDKGSSILGPFLVGLLTDKTHNIRY) are Vacuolar-facing. A helical membrane pass occupies residues 486-506 (SFYFFFLLLMLSLPVLNCLDV). The Cytoplasmic portion of the chain corresponds to 507–528 (KRGRREAEELSQVLPESERRLD).

The protein belongs to the ATG22 family.

The protein localises to the vacuole membrane. Vacuolar effluxer which mediate the efflux of amino acids resulting from autophagic degradation. The release of autophagic amino acids allows the maintenance of protein synthesis and viability during nitrogen starvation. The chain is Autophagy-related protein 22 (ATG22) from Saccharomyces cerevisiae (strain YJM789) (Baker's yeast).